We begin with the raw amino-acid sequence, 454 residues long: uncharacterized protein (454 aa).

125–132 (GDVGCGKT) contributes to the ATP binding site.

The protein belongs to the AFG1 ATPase family.

This is an uncharacterized protein from Schizosaccharomyces pombe (strain 972 / ATCC 24843) (Fission yeast).